A 622-amino-acid chain; its full sequence is Low affinity potassium transport system protein Kup (622 aa).

The next 12 membrane-spanning stretches (helical) occupy residues 9–29, 49–69, 103–123, 137–157, 165–185, 213–233, 247–267, 276–296, 337–357, 363–383, 396–416, and 419–439; these read LSAITLAAIGVVYGDIGTSPL, VFGFLSLIFWLLIFVVSIKYL, VIMGLIGGSFFYGEVVITPAI, PELDTWVVPLSIIVLTLLFMI, VGKLFAPIMLTWFLILAGLGL, VSFIALGAVVLSITGVEALYA, WFSVVLPSLTLNYFGQGALLL, PFFLLAPEWALIPLLILAALA, IYIPFVNWMLYFAVVIVIVSF, LAAAYGIAVTGTMVLTSILST, FVALILVAFLCVDVPLFSANL, and LLSGGWLPLTLGIVMFIIMTT.

The protein belongs to the HAK/KUP transporter (TC 2.A.72) family.

It is found in the cell inner membrane. The enzyme catalyses K(+)(in) + H(+)(in) = K(+)(out) + H(+)(out). Its function is as follows. Responsible for the low-affinity transport of potassium into the cell. Likely operates as a K(+):H(+) symporter. This chain is Low affinity potassium transport system protein Kup, found in Citrobacter koseri (strain ATCC BAA-895 / CDC 4225-83 / SGSC4696).